Consider the following 572-residue polypeptide: DBH-like monooxygenase protein 2 homolog (572 aa).

Residues 1–26 (MGTCLKGNMSVLSLVLFLLSVQQFWA) form the signal peptide. N-linked (GlcNAc...) asparagine glycosylation is found at asparagine 8, asparagine 64, asparagine 187, and asparagine 203. At 27 to 552 (QEDPLLPFSE…SPPEPCVRAC (526 aa)) the chain is on the extracellular side. One can recognise a DOMON domain in the interval 42-157 (HNVQLKWGFD…LPMKLIYAYG (116 aa)). Tyrosine 207 is a catalytic residue. 2 cysteine pairs are disulfide-bonded: cysteine 209–cysteine 256 and cysteine 244–cysteine 263. Cu cation contacts are provided by histidine 237 and histidine 238. Histidine 301 is a binding site for Cu cation. Asparagine 306 is a glycosylation site (N-linked (GlcNAc...) asparagine). Intrachain disulfides connect cysteine 358–cysteine 472 and cysteine 435–cysteine 457. Histidine 381 is an active-site residue. Cu cation is bound by residues histidine 381, histidine 383, and methionine 456. N-linked (GlcNAc...) asparagine glycans are attached at residues asparagine 468, asparagine 503, asparagine 518, and asparagine 534. A helical membrane pass occupies residues 553–571 (ATKNLAFMSLFLCLAGMWA). A topological domain (cytoplasmic) is located at residue serine 572.

The protein belongs to the copper type II ascorbate-dependent monooxygenase family. The cofactor is Cu(2+).

The protein resides in the membrane. In Danio rerio (Zebrafish), this protein is DBH-like monooxygenase protein 2 homolog (moxd2).